Reading from the N-terminus, the 303-residue chain is MTRTDQDSWDLASSVGATATMVAAARALASTGERPIINDPFAAPLVRAVGLDFFRRLVDGEVAPADPQRGERDLQLETDSIAVRTRFFDDFFTGAARDGIRQSVILAAGLDARAYRLDWPAGAVVYEVDQPKVVEFKTNTMAALDARPAAQLRTVSIDLREDWPEALRANGFDVTQPTSWSAEGLLMYLPPEAQDRLFDNITALSAPGSRLATEYHPDATGTTMAQRAQEFNDRWARVGCDIDLSGLFFDGERSNVVEYLTGRGWRVSARPRRDLFDDYGLAYPEDDETAQFPNIVAVSAELG.

S-adenosyl-L-methionine contacts are provided by residues Asp-129 and 158–159 (DL).

The protein belongs to the UPF0677 family.

Functionally, exhibits S-adenosyl-L-methionine-dependent methyltransferase activity. This Mycolicibacterium paratuberculosis (strain ATCC BAA-968 / K-10) (Mycobacterium paratuberculosis) protein is Putative S-adenosyl-L-methionine-dependent methyltransferase MAP_4197c.